Reading from the N-terminus, the 288-residue chain is 4-diphosphocytidyl-2-C-methyl-D-erythritol kinase (288 aa).

Lys8 is a catalytic residue. 90–100 lines the ATP pocket; that stretch reads PVGAGLAGGSS. The active site involves Asp132.

This sequence belongs to the GHMP kinase family. IspE subfamily.

The catalysed reaction is 4-CDP-2-C-methyl-D-erythritol + ATP = 4-CDP-2-C-methyl-D-erythritol 2-phosphate + ADP + H(+). It participates in isoprenoid biosynthesis; isopentenyl diphosphate biosynthesis via DXP pathway; isopentenyl diphosphate from 1-deoxy-D-xylulose 5-phosphate: step 3/6. In terms of biological role, catalyzes the phosphorylation of the position 2 hydroxy group of 4-diphosphocytidyl-2C-methyl-D-erythritol. The sequence is that of 4-diphosphocytidyl-2-C-methyl-D-erythritol kinase from Chlamydia trachomatis serovar D (strain ATCC VR-885 / DSM 19411 / UW-3/Cx).